The chain runs to 332 residues: Anthranilate phosphoribosyltransferase (332 aa).

5-phospho-alpha-D-ribose 1-diphosphate contacts are provided by residues Gly79, 82-83, Thr87, 89-92, 107-115, and Ala119; these read GD, NIST, and KHGNYGATS. Anthranilate is bound at residue Gly79. Ser91 provides a ligand contact to Mg(2+). Asn110 lines the anthranilate pocket. Residue Arg165 coordinates anthranilate. Asp223 and Glu224 together coordinate Mg(2+).

Belongs to the anthranilate phosphoribosyltransferase family. In terms of assembly, homodimer. It depends on Mg(2+) as a cofactor.

The catalysed reaction is N-(5-phospho-beta-D-ribosyl)anthranilate + diphosphate = 5-phospho-alpha-D-ribose 1-diphosphate + anthranilate. Its pathway is amino-acid biosynthesis; L-tryptophan biosynthesis; L-tryptophan from chorismate: step 2/5. In terms of biological role, catalyzes the transfer of the phosphoribosyl group of 5-phosphorylribose-1-pyrophosphate (PRPP) to anthranilate to yield N-(5'-phosphoribosyl)-anthranilate (PRA). This Bacteroides thetaiotaomicron (strain ATCC 29148 / DSM 2079 / JCM 5827 / CCUG 10774 / NCTC 10582 / VPI-5482 / E50) protein is Anthranilate phosphoribosyltransferase.